A 264-amino-acid polypeptide reads, in one-letter code: tRNA pseudouridine synthase A (264 aa).

Residue Asp51 is the Nucleophile of the active site. Tyr109 serves as a coordination point for substrate.

It belongs to the tRNA pseudouridine synthase TruA family. As to quaternary structure, homodimer.

The catalysed reaction is uridine(38/39/40) in tRNA = pseudouridine(38/39/40) in tRNA. Formation of pseudouridine at positions 38, 39 and 40 in the anticodon stem and loop of transfer RNAs. This is tRNA pseudouridine synthase A from Polaromonas naphthalenivorans (strain CJ2).